Consider the following 242-residue polypeptide: METSVNFDPSNMPQHVAIIMDGNGRWAKKQGKLRVFGHQNGVNAVRAAVHFAAKYGIKVLTLYAFSSENWNRPATEVSALMSLFIQALNTEVSKLHKHNIRLNILGDKTRFSDSLQKRIIESETLTAHNTRLTLNIAANYGSHWDITEATKKLAEKVKLGKISVTDITPEKVQRALVTAEQPPVDLLIRTSGEQRISNFLLWQIAYAELFFSDVLWPDFDETSFSEAIYAYQQRERRFGGCE.

Asp-21 is a catalytic residue. Asp-21 is a binding site for Mg(2+). Residues 22-25 (GNGR), Trp-26, Arg-34, His-38, and 66-68 (SSE) contribute to the substrate site. The active-site Proton acceptor is Asn-69. Residues Trp-70, Arg-72, Arg-189, and 195–197 (RIS) each bind substrate. Residue Glu-208 coordinates Mg(2+).

The protein belongs to the UPP synthase family. In terms of assembly, homodimer. It depends on Mg(2+) as a cofactor.

The catalysed reaction is 8 isopentenyl diphosphate + (2E,6E)-farnesyl diphosphate = di-trans,octa-cis-undecaprenyl diphosphate + 8 diphosphate. In terms of biological role, catalyzes the sequential condensation of isopentenyl diphosphate (IPP) with (2E,6E)-farnesyl diphosphate (E,E-FPP) to yield (2Z,6Z,10Z,14Z,18Z,22Z,26Z,30Z,34E,38E)-undecaprenyl diphosphate (di-trans,octa-cis-UPP). UPP is the precursor of glycosyl carrier lipid in the biosynthesis of bacterial cell wall polysaccharide components such as peptidoglycan and lipopolysaccharide. The chain is Ditrans,polycis-undecaprenyl-diphosphate synthase ((2E,6E)-farnesyl-diphosphate specific) from Haemophilus ducreyi (strain 35000HP / ATCC 700724).